We begin with the raw amino-acid sequence, 1091 residues long: Multiple epidermal growth factor-like domains protein 11 (1091 aa).

The N-terminal stretch at 1 to 18 is a signal peptide; sequence MAPSAVGLLVFLLQAALA. Over 19-847 the chain is Extracellular; the sequence is LNPEDPNVCS…SPALGAERHS (829 aa). The 78-residue stretch at 23–100 folds into the EMI domain; the sequence is DPNVCSHWES…YYENGDFCIP (78 aa). 14 disulfide bridges follow: C27/C88, C53/C62, C87/C98, C102/C117, C119/C128, C145/C153, C147/C160, C162/C171, C184/C196, C190/C203, C205/C214, C227/C239, C233/C246, and C248/C257. 9 EGF-like domains span residues 94–129, 142–172, 180–215, 223–258, 266–301, 314–344, 398–433, 441–476, and 484–519; these read NGDF…PDCS, SNRC…WRCE, HGKG…VYCE, HGAH…AVCA, FGQN…DRCQ, SQRC…PSCQ, YGNG…EVCA, YGPN…LDCS, and WGLN…DSCE. N269 carries an N-linked (GlcNAc...) asparagine glycan. Disulfide bonds link C270–C282, C276–C289, C291–C300, C317–C325, C319–C332, C334–C343, C402–C414, C408–C421, C423–C432, C445–C457, C451–C464, C466–C475, C488–C500, C494–C507, and C509–C518. N530 is a glycosylation site (N-linked (GlcNAc...) asparagine). EGF-like domains follow at residues 570–605, 613–650, 658–693, 706–736, 749–779, and 787–822; these read WGPN…PLCQ, YGHG…ALCN, FGQD…KDCS, FHTC…LFCT, GHIC…RHCE, and FGYG…IRCD. Cystine bridges form between C574/C586, C580/C593, C595/C604, C617/C631, C621/C638, C640/C649, C662/C674, C668/C681, C683/C692, C709/C717, C711/C724, C726/C735, C752/C760, C754/C767, C769/C778, C791/C803, C797/C810, and C812/C821. Residues 848-868 traverse the membrane as a helical segment; the sequence is VGAVTGIVLLLFLVVVLLGLF. Residues 869 to 1091 lie on the Cytoplasmic side of the membrane; that stretch reads AWRRRRQKEK…NIYEVGRCLT (223 aa).

It belongs to the MEGF family. Homomer. Does not interact with MEGF10.

Its subcellular location is the cell membrane. It localises to the basolateral cell membrane. May regulate the mosaic spacing of specific neuron subtypes in the retina through homotypic retinal neuron repulsion. Mosaics provide a mechanism to distribute each cell type evenly across the retina, ensuring that all parts of the visual field have access to a full set of processing elements. This Mus musculus (Mouse) protein is Multiple epidermal growth factor-like domains protein 11 (Megf11).